Reading from the N-terminus, the 143-residue chain is Putative pre-16S rRNA nuclease (143 aa).

It belongs to the YqgF nuclease family.

It is found in the cytoplasm. Functionally, could be a nuclease involved in processing of the 5'-end of pre-16S rRNA. This chain is Putative pre-16S rRNA nuclease, found in Lactococcus lactis subsp. cremoris (strain SK11).